A 319-amino-acid polypeptide reads, in one-letter code: DNA-directed RNA polymerases II, IV and V subunit 3 (319 aa).

Position 1 is an N-acetylmethionine (M1).

Belongs to the archaeal Rpo3/eukaryotic RPB3 RNA polymerase subunit family. As to quaternary structure, component of the RNA polymerase II complex consisting of at least 12 subunits. Interacts with SHH1, CLSY1, NRPB11 and NRPD1. Interacts with IYO.

It is found in the nucleus. Functionally, DNA-dependent RNA polymerase catalyzes the transcription of DNA into RNA using the four ribonucleoside triphosphates as substrates. Component of RNA polymerase II which synthesizes mRNA precursors and many functional non-coding RNAs. Pol II is the central component of the basal RNA polymerase II transcription machinery. It is composed of mobile elements that move relative to each other. NRPB3 is part of the core element with the central large cleft and the clamp element that moves to open and close the cleft. Component of RNA polymerases IV and V which mediate short-interfering RNAs (siRNA) accumulation and subsequent RNA-directed DNA methylation-dependent (RdDM) transcriptional gene silencing (TGS) of endogenous repeated sequences, including transposable elements. The polypeptide is DNA-directed RNA polymerases II, IV and V subunit 3 (NRPB3) (Arabidopsis thaliana (Mouse-ear cress)).